We begin with the raw amino-acid sequence, 464 residues long: Kynureninase 2 (464 aa).

Pyridoxal 5'-phosphate is bound by residues Leu135, Thr136, 163–166, Asp248, His251, and Tyr273; that span reads FPSD. Lys274 carries the N6-(pyridoxal phosphate)lysine modification. Residues Trp313 and Asn341 each contribute to the pyridoxal 5'-phosphate site.

Belongs to the kynureninase family. Homodimer. It depends on pyridoxal 5'-phosphate as a cofactor.

It localises to the cytoplasm. It catalyses the reaction L-kynurenine + H2O = anthranilate + L-alanine + H(+). It carries out the reaction 3-hydroxy-L-kynurenine + H2O = 3-hydroxyanthranilate + L-alanine + H(+). The protein operates within amino-acid degradation; L-kynurenine degradation; L-alanine and anthranilate from L-kynurenine: step 1/1. Its pathway is cofactor biosynthesis; NAD(+) biosynthesis; quinolinate from L-kynurenine: step 2/3. In terms of biological role, catalyzes the cleavage of L-kynurenine (L-Kyn) and L-3-hydroxykynurenine (L-3OHKyn) into anthranilic acid (AA) and 3-hydroxyanthranilic acid (3-OHAA), respectively. The polypeptide is Kynureninase 2 (bna5-2) (Aspergillus clavatus (strain ATCC 1007 / CBS 513.65 / DSM 816 / NCTC 3887 / NRRL 1 / QM 1276 / 107)).